Reading from the N-terminus, the 226-residue chain is MSLLARLEQSVHENGGLIVSCQPVPGSPMDKPEIVAAMAQAAASAGAVAVRIEGIENLRTVRPHLSVPIIGIIKRDLTGSPVRITPYLQDVDALAQAGADIIAFDASFRSRPVDIDSLLTRIRLHGLLAMADCSTVNEGISCHQKGIEFIGTTLSGYTGPITPVEPDLAMVTQLSHAGCRVIAEGRYNTPALAANAIEHGAWAVTVGSAITRIEHICQWFSHAVKR.

This sequence belongs to the NanE family.

The catalysed reaction is an N-acyl-D-glucosamine 6-phosphate = an N-acyl-D-mannosamine 6-phosphate. It participates in amino-sugar metabolism; N-acetylneuraminate degradation; D-fructose 6-phosphate from N-acetylneuraminate: step 3/5. Its function is as follows. Converts N-acetylmannosamine-6-phosphate (ManNAc-6-P) to N-acetylglucosamine-6-phosphate (GlcNAc-6-P). This chain is Putative N-acetylmannosamine-6-phosphate 2-epimerase 1 (nanE1), found in Salmonella typhimurium (strain LT2 / SGSC1412 / ATCC 700720).